The sequence spans 152 residues: Cytochrome c oxidase subunit 5A, mitochondrial (152 aa).

The N-terminal 43 residues, 1–43 (MLGTALRRCAVAAAAASRAGPRGLLHPAPAPGPAAAIQSIRCY), are a transit peptide targeting the mitochondrion. The SIFI-degron motif lies at 2–22 (LGTALRRCAVAAAAASRAGPR). Lysine 89 and lysine 115 each carry N6-acetyllysine. Phosphothreonine is present on threonine 143.

It belongs to the cytochrome c oxidase subunit 5A family. In terms of assembly, component of the cytochrome c oxidase (complex IV, CIV), a multisubunit enzyme composed of 14 subunits. The complex is composed of a catalytic core of 3 subunits MT-CO1, MT-CO2 and MT-CO3, encoded in the mitochondrial DNA, and 11 supernumerary subunits COX4I, COX5A, COX5B, COX6A, COX6B, COX6C, COX7A, COX7B, COX7C, COX8 and NDUFA4, which are encoded in the nuclear genome. The complex exists as a monomer or a dimer and forms supercomplexes (SCs) in the inner mitochondrial membrane with NADH-ubiquinone oxidoreductase (complex I, CI) and ubiquinol-cytochrome c oxidoreductase (cytochrome b-c1 complex, complex III, CIII), resulting in different assemblies (supercomplex SCI(1)III(2)IV(1) and megacomplex MCI(2)III(2)IV(2)). Interacts with AFG1L. Interacts with RAB5IF. Post-translationally, in response to mitochondrial stress, the precursor protein is ubiquitinated by the SIFI complex in the cytoplasm before mitochondrial import, leading to its degradation. Within the SIFI complex, UBR4 initiates ubiquitin chain that are further elongated or branched by KCMF1.

Its subcellular location is the mitochondrion inner membrane. It participates in energy metabolism; oxidative phosphorylation. Its function is as follows. Component of the cytochrome c oxidase, the last enzyme in the mitochondrial electron transport chain which drives oxidative phosphorylation. The respiratory chain contains 3 multisubunit complexes succinate dehydrogenase (complex II, CII), ubiquinol-cytochrome c oxidoreductase (cytochrome b-c1 complex, complex III, CIII) and cytochrome c oxidase (complex IV, CIV), that cooperate to transfer electrons derived from NADH and succinate to molecular oxygen, creating an electrochemical gradient over the inner membrane that drives transmembrane transport and the ATP synthase. Cytochrome c oxidase is the component of the respiratory chain that catalyzes the reduction of oxygen to water. Electrons originating from reduced cytochrome c in the intermembrane space (IMS) are transferred via the dinuclear copper A center (CU(A)) of subunit 2 and heme A of subunit 1 to the active site in subunit 1, a binuclear center (BNC) formed by heme A3 and copper B (CU(B)). The BNC reduces molecular oxygen to 2 water molecules using 4 electrons from cytochrome c in the IMS and 4 protons from the mitochondrial matrix. The protein is Cytochrome c oxidase subunit 5A, mitochondrial (COX5A) of Eulemur fulvus fulvus (Brown lemur).